The primary structure comprises 94 residues: Aspartyl/glutamyl-tRNA(Asn/Gln) amidotransferase subunit C (94 aa).

This sequence belongs to the GatC family. As to quaternary structure, heterotrimer of A, B and C subunits.

It carries out the reaction L-glutamyl-tRNA(Gln) + L-glutamine + ATP + H2O = L-glutaminyl-tRNA(Gln) + L-glutamate + ADP + phosphate + H(+). The catalysed reaction is L-aspartyl-tRNA(Asn) + L-glutamine + ATP + H2O = L-asparaginyl-tRNA(Asn) + L-glutamate + ADP + phosphate + 2 H(+). In terms of biological role, allows the formation of correctly charged Asn-tRNA(Asn) or Gln-tRNA(Gln) through the transamidation of misacylated Asp-tRNA(Asn) or Glu-tRNA(Gln) in organisms which lack either or both of asparaginyl-tRNA or glutaminyl-tRNA synthetases. The reaction takes place in the presence of glutamine and ATP through an activated phospho-Asp-tRNA(Asn) or phospho-Glu-tRNA(Gln). The polypeptide is Aspartyl/glutamyl-tRNA(Asn/Gln) amidotransferase subunit C (Solidesulfovibrio magneticus (strain ATCC 700980 / DSM 13731 / RS-1) (Desulfovibrio magneticus)).